The sequence spans 297 residues: 33 kDa chaperonin (297 aa).

Disulfide bonds link Cys-233-Cys-235 and Cys-267-Cys-270.

Belongs to the HSP33 family. Under oxidizing conditions two disulfide bonds are formed involving the reactive cysteines. Under reducing conditions zinc is bound to the reactive cysteines and the protein is inactive.

It localises to the cytoplasm. Functionally, redox regulated molecular chaperone. Protects both thermally unfolding and oxidatively damaged proteins from irreversible aggregation. Plays an important role in the bacterial defense system toward oxidative stress. The sequence is that of 33 kDa chaperonin from Haemophilus ducreyi (strain 35000HP / ATCC 700724).